A 20-amino-acid polypeptide reads, in one-letter code: Peptide encoded by miPEP171b (20 aa).

As to expression, lateral root initiations.

Regulatory peptide encoded by the primary transcript (pri-miR171b) of the microRNA miR171b that enhances the accumulation of its corresponding mature miRNA. Acts probably as a transcriptional activator of its corresponding pri-miRNA. Has no effect on the accumulation of other miRNAs. Addition of synthetic miPEP171b increases the abundance of miR171b, with consequent reduction of lateral root formation. The protein is Peptide encoded by miPEP171b of Medicago truncatula (Barrel medic).